The chain runs to 212 residues: MPTREIRHPLIRHKLGLMRRADISTKNFRELAQEVGALLTYEATQDLPLETYEIDGWCGKVQVEKIAGKKITVVPILRAGIGMLDGVLSLIPGAKVSAVGVARNEETLEAHTYLEKLAPDINQRLALIIDPMLATGGSMVATIDLLKKAGCKEIRAMVLVAAPEGIEVVEKAHPDVQIYTASIDQRLNEHGYIVPGLGDAGDKIFGTKQKDA.

5-phospho-alpha-D-ribose 1-diphosphate-binding positions include Arg-78, Arg-103, and 130–138 (DPMLATGGS). Residues Ile-193 and 198 to 200 (GDA) contribute to the uracil site. Asp-199 contacts 5-phospho-alpha-D-ribose 1-diphosphate.

This sequence belongs to the UPRTase family. Requires Mg(2+) as cofactor.

It carries out the reaction UMP + diphosphate = 5-phospho-alpha-D-ribose 1-diphosphate + uracil. Its pathway is pyrimidine metabolism; UMP biosynthesis via salvage pathway; UMP from uracil: step 1/1. With respect to regulation, allosterically activated by GTP. Catalyzes the conversion of uracil and 5-phospho-alpha-D-ribose 1-diphosphate (PRPP) to UMP and diphosphate. This chain is Uracil phosphoribosyltransferase, found in Pseudomonas entomophila (strain L48).